A 177-amino-acid polypeptide reads, in one-letter code: Large ribosomal subunit protein uL6 (177 aa).

At Lys-44 the chain carries N6-acetyllysine.

It belongs to the universal ribosomal protein uL6 family. In terms of assembly, part of the 50S ribosomal subunit.

Its function is as follows. This protein binds to the 23S rRNA, and is important in its secondary structure. It is located near the subunit interface in the base of the L7/L12 stalk, and near the tRNA binding site of the peptidyltransferase center. In Shigella sonnei (strain Ss046), this protein is Large ribosomal subunit protein uL6.